The primary structure comprises 249 residues: Uridylate kinase (249 aa).

13-16 (KLSG) is a binding site for ATP. Position 55 (G55) interacts with UMP. G56 and R60 together coordinate ATP. UMP contacts are provided by residues D75 and 136 to 143 (IGNPFFTT). Residues T163, F169, and D172 each contribute to the ATP site.

It belongs to the UMP kinase family. In terms of assembly, homohexamer.

It localises to the cytoplasm. It catalyses the reaction UMP + ATP = UDP + ADP. Its pathway is pyrimidine metabolism; CTP biosynthesis via de novo pathway; UDP from UMP (UMPK route): step 1/1. With respect to regulation, inhibited by UTP. Functionally, catalyzes the reversible phosphorylation of UMP to UDP. The polypeptide is Uridylate kinase (Baumannia cicadellinicola subsp. Homalodisca coagulata).